We begin with the raw amino-acid sequence, 695 residues long: Zinc finger SWIM domain-containing protein 3 (695 aa).

Residues 434–490 form a disordered region; the sequence is NAPKLRRTRLPSTPPRPKKPFRICGGGDTRLPVEEVEETKADSAQSQLPQPQDQSSK. Low complexity predominate over residues 475 to 489; that stretch reads DSAQSQLPQPQDQSS. The segment at 530-571 adopts an SWIM-type zinc-finger fold; the sequence is VAVQLLENSHQVSKDGCSCSCSFQQCYHLPCRHILALLHTSQ.

The sequence is that of Zinc finger SWIM domain-containing protein 3 (Zswim3) from Mus musculus (Mouse).